The primary structure comprises 72 residues: SRY-related protein AES6 (72 aa).

The HMG box DNA-binding region spans 1 to 69; that stretch reads VKRPMNAFMV…KHMADYPDYK (69 aa).

The protein resides in the nucleus. This chain is SRY-related protein AES6, found in Alligator mississippiensis (American alligator).